The chain runs to 635 residues: Threonine--tRNA ligase (635 aa).

In terms of domain architecture, TGS spans 1–61; it reads MIKITLKDGS…KEDAALELLT (61 aa). Residues 242 to 532 form a catalytic region; that stretch reads DHRKLGQELD…LTEHFAGAFP (291 aa). Zn(2+)-binding residues include Cys333, His384, and His509.

It belongs to the class-II aminoacyl-tRNA synthetase family. In terms of assembly, homodimer. Zn(2+) is required as a cofactor.

The protein localises to the cytoplasm. The catalysed reaction is tRNA(Thr) + L-threonine + ATP = L-threonyl-tRNA(Thr) + AMP + diphosphate + H(+). Its function is as follows. Catalyzes the attachment of threonine to tRNA(Thr) in a two-step reaction: L-threonine is first activated by ATP to form Thr-AMP and then transferred to the acceptor end of tRNA(Thr). Also edits incorrectly charged L-seryl-tRNA(Thr). The chain is Threonine--tRNA ligase from Desulforamulus reducens (strain ATCC BAA-1160 / DSM 100696 / MI-1) (Desulfotomaculum reducens).